The following is a 447-amino-acid chain: Asparagine--tRNA ligase (447 aa).

Belongs to the class-II aminoacyl-tRNA synthetase family. Homodimer.

The protein resides in the cytoplasm. It catalyses the reaction tRNA(Asn) + L-asparagine + ATP = L-asparaginyl-tRNA(Asn) + AMP + diphosphate + H(+). This is Asparagine--tRNA ligase from Lactococcus lactis subsp. lactis (strain IL1403) (Streptococcus lactis).